Consider the following 147-residue polypeptide: Cyanate hydratase (147 aa).

Active-site residues include Arg-88, Glu-91, and Ser-114.

The protein belongs to the cyanase family.

It catalyses the reaction cyanate + hydrogencarbonate + 3 H(+) = NH4(+) + 2 CO2. Functionally, catalyzes the reaction of cyanate with bicarbonate to produce ammonia and carbon dioxide. This is Cyanate hydratase from Prochlorococcus marinus (strain NATL2A).